The chain runs to 156 residues: Small ribosomal subunit protein uS7 (156 aa).

This sequence belongs to the universal ribosomal protein uS7 family. As to quaternary structure, part of the 30S ribosomal subunit. Contacts proteins S9 and S11.

One of the primary rRNA binding proteins, it binds directly to 16S rRNA where it nucleates assembly of the head domain of the 30S subunit. Is located at the subunit interface close to the decoding center, probably blocks exit of the E-site tRNA. The chain is Small ribosomal subunit protein uS7 from Streptococcus agalactiae serotype Ia (strain ATCC 27591 / A909 / CDC SS700).